Here is a 200-residue protein sequence, read N- to C-terminus: Lipopolysaccharide core heptose(II)-phosphate phosphatase (200 aa).

Positions 1-25 (MLAFCRSSLKSKKYFIILLALAAIA) are cleaved as a signal peptide.

Belongs to the phosphoglycerate mutase family. Ais subfamily.

The protein resides in the periplasm. The protein operates within bacterial outer membrane biogenesis; lipopolysaccharide metabolism. Its function is as follows. Catalyzes the dephosphorylation of heptose(II) of the outer membrane lipopolysaccharide core. The polypeptide is Lipopolysaccharide core heptose(II)-phosphate phosphatase (Escherichia coli O157:H7 (strain EC4115 / EHEC)).